The sequence spans 398 residues: uncharacterized protein (398 aa).

The signal sequence occupies residues 1–21; sequence MRKVGITLSVVALVIMGFVAG. Cys-22 is modified (N-acetylcysteine). Residue Cys-22 is the site of S-archaeol cysteine attachment.

The protein belongs to the BMP lipoprotein family.

It localises to the cell membrane. This is an uncharacterized protein from Pyrococcus furiosus (strain ATCC 43587 / DSM 3638 / JCM 8422 / Vc1).